A 147-amino-acid polypeptide reads, in one-letter code: Large ribosomal subunit protein uL13 (147 aa).

It belongs to the universal ribosomal protein uL13 family. As to quaternary structure, part of the 50S ribosomal subunit.

In terms of biological role, this protein is one of the early assembly proteins of the 50S ribosomal subunit, although it is not seen to bind rRNA by itself. It is important during the early stages of 50S assembly. The chain is Large ribosomal subunit protein uL13 from Rhodococcus opacus (strain B4).